The sequence spans 230 residues: Lipoprotein-releasing system ATP-binding protein LolD (230 aa).

An ABC transporter domain is found at 6 to 230 (LQVQAVSKSY…GYLQVPESAQ (225 aa)). 42–49 (GTSGSGKS) is an ATP binding site.

This sequence belongs to the ABC transporter superfamily. Lipoprotein translocase (TC 3.A.1.125) family. In terms of assembly, the complex is composed of two ATP-binding proteins (LolD) and two transmembrane proteins (LolC and LolE).

The protein localises to the cell inner membrane. In terms of biological role, part of the ABC transporter complex LolCDE involved in the translocation of mature outer membrane-directed lipoproteins, from the inner membrane to the periplasmic chaperone, LolA. Responsible for the formation of the LolA-lipoprotein complex in an ATP-dependent manner. This Shewanella oneidensis (strain ATCC 700550 / JCM 31522 / CIP 106686 / LMG 19005 / NCIMB 14063 / MR-1) protein is Lipoprotein-releasing system ATP-binding protein LolD.